Consider the following 855-residue polypeptide: DNA mismatch repair protein MutS (855 aa).

An ATP-binding site is contributed by 616–623 (GPNMGGKS).

It belongs to the DNA mismatch repair MutS family.

In terms of biological role, this protein is involved in the repair of mismatches in DNA. It is possible that it carries out the mismatch recognition step. This protein has a weak ATPase activity. The chain is DNA mismatch repair protein MutS from Salmonella schwarzengrund (strain CVM19633).